The chain runs to 521 residues: Vang-like protein 2 (521 aa).

Positions Met1–His81 are disordered. The Cytoplasmic portion of the chain corresponds to Met1–Gly108. Over residues Gly15–Lys33 the composition is skewed to basic residues. Residues Glu57 to Asn67 show a composition bias toward basic and acidic residues. Low complexity predominate over residues Gly69–His81. The chain crosses the membrane as a helical span at residues Val109–Leu129. The Extracellular portion of the chain corresponds to Pro130–Gly147. The helical transmembrane segment at Leu148–Phe168 threads the bilayer. Over Arg169 to Val178 the chain is Cytoplasmic. A helical transmembrane segment spans residues Phe179–Phe199. The Extracellular portion of the chain corresponds to Tyr200–Tyr218. A helical transmembrane segment spans residues Ala219 to Leu239. The Cytoplasmic segment spans residues Arg240–Val521. The short motif at Glu518–Val521 is the PDZ-binding element.

This sequence belongs to the Vang family. In terms of assembly, interacts with dvl/dsh. Interacts with prickle3.

Its subcellular location is the cell membrane. In terms of biological role, has a role in non-canonical Wnt/planar cell polarity (PCP) signaling; can recruit dvl/dsh and prickle from the cytoplasm to the plasma membrane. Acts in a PCP complex to regulate the polarized assembly of fibronectrin on the surface of the mesoderm during gastrulation. Regulates convergent extension in both dorsal mesoderm and neural tissue without affecting cell fate. Regulates neural fold closure during neurulation. May be required for cell surface localization of fzd3 and fzd6 in the inner ear. This chain is Vang-like protein 2, found in Xenopus tropicalis (Western clawed frog).